Consider the following 301-residue polypeptide: Probable alpha-L-glutamate ligase 2 (301 aa).

The region spanning 104 to 287 is the ATP-grasp domain; it reads LQLLSRKGIG…VTEPIVEYIE (184 aa). Residues Lys141, 178–179, Asp187, and 211–213 each bind ATP; these read EY and RSN. The Mg(2+) site is built by Asp248, Glu260, and Asn262. The Mn(2+) site is built by Asp248, Glu260, and Asn262.

This sequence belongs to the RimK family. It depends on Mg(2+) as a cofactor. Mn(2+) serves as cofactor.

This Shewanella baltica (strain OS195) protein is Probable alpha-L-glutamate ligase 2.